Here is a 219-residue protein sequence, read N- to C-terminus: Large ribosomal subunit protein uL3 (219 aa).

The disordered stretch occupies residues 140–163; that stretch reads SASHGAHRNHRKPGSIGASSTPSR.

This sequence belongs to the universal ribosomal protein uL3 family. Part of the 50S ribosomal subunit. Forms a cluster with proteins L14 and L19.

One of the primary rRNA binding proteins, it binds directly near the 3'-end of the 23S rRNA, where it nucleates assembly of the 50S subunit. This Leifsonia xyli subsp. xyli (strain CTCB07) protein is Large ribosomal subunit protein uL3.